Here is a 333-residue protein sequence, read N- to C-terminus: MLTLTHICTVSYEVRSTFLFISVLEFAVGFLTNAFISLVNFWDVVKRQPLSNSDCVLLCLSISRLFLHGLLFLSAIQLTHFQKLSEPLNHSYQVILMLWMIANQANLWLAACLSLLYCSKLIRFSHTFLICLASWVSRKISQMLLGIILCSCICTVLCVWCFFGRLHFTVTTVLFMNNNTRLNWQIKDLNLFYSFLFCYLWSVPPFLLFLVSSGMLTVSLGRHMRTMKVYTRDSRDPSLEAHIKALKSLVSFFCFFVISSCAAFISVPLLILWHDKIGVMVCVGIMAACPSGHAAVLISGNAKLRRAVTTILLWAQSSLKVRADHMADSRTLC.

Over 1–17 the chain is Extracellular; that stretch reads MLTLTHICTVSYEVRST. A helical transmembrane segment spans residues 18-38; that stretch reads FLFISVLEFAVGFLTNAFISL. The Cytoplasmic portion of the chain corresponds to 39-55; the sequence is VNFWDVVKRQPLSNSDC. Residues 56–76 form a helical membrane-spanning segment; the sequence is VLLCLSISRLFLHGLLFLSAI. Residues 77 to 94 lie on the Extracellular side of the membrane; sequence QLTHFQKLSEPLNHSYQV. A helical transmembrane segment spans residues 95–115; it reads ILMLWMIANQANLWLAACLSL. Residues 116–142 lie on the Cytoplasmic side of the membrane; that stretch reads LYCSKLIRFSHTFLICLASWVSRKISQ. A helical membrane pass occupies residues 143–163; it reads MLLGIILCSCICTVLCVWCFF. Over 164–190 the chain is Extracellular; it reads GRLHFTVTTVLFMNNNTRLNWQIKDLN. N-linked (GlcNAc...) asparagine glycosylation is present at N178. The helical transmembrane segment at 191–211 threads the bilayer; sequence LFYSFLFCYLWSVPPFLLFLV. Residues 212–251 lie on the Cytoplasmic side of the membrane; it reads SSGMLTVSLGRHMRTMKVYTRDSRDPSLEAHIKALKSLVS. The helical transmembrane segment at 252–272 threads the bilayer; sequence FFCFFVISSCAAFISVPLLIL. The Extracellular segment spans residues 273–276; sequence WHDK. A helical transmembrane segment spans residues 277–297; it reads IGVMVCVGIMAACPSGHAAVL. Residues 298-333 lie on the Cytoplasmic side of the membrane; sequence ISGNAKLRRAVTTILLWAQSSLKVRADHMADSRTLC.

Belongs to the G-protein coupled receptor T2R family.

It localises to the membrane. In terms of biological role, receptor that may play a role in the perception of bitterness and is gustducin-linked. May play a role in sensing the chemical composition of the gastrointestinal content. The activity of this receptor may stimulate alpha gustducin, mediate PLC-beta-2 activation and lead to the gating of TRPM5. In Papio hamadryas (Hamadryas baboon), this protein is Taste receptor type 2 member 38 (TAS2R38).